The chain runs to 215 residues: Cytochrome b6 (215 aa).

The helical transmembrane segment at 32-52 (IFYCLGGITLTCFLVQVATGF) threads the bilayer. Residue Cys35 coordinates heme c. Heme b-binding residues include His86 and His100. 3 consecutive transmembrane segments (helical) span residues 90 to 110 (ASMM…TGGF), 116 to 136 (LTWV…VTGY), and 186 to 206 (LHTF…FLMI). Positions 187 and 202 each coordinate heme b.

Belongs to the cytochrome b family. PetB subfamily. As to quaternary structure, the 4 large subunits of the cytochrome b6-f complex are cytochrome b6, subunit IV (17 kDa polypeptide, PetD), cytochrome f and the Rieske protein, while the 4 small subunits are PetG, PetL, PetM and PetN. The complex functions as a dimer. The cofactor is heme b. Heme c serves as cofactor.

The protein resides in the plastid. The protein localises to the chloroplast thylakoid membrane. Component of the cytochrome b6-f complex, which mediates electron transfer between photosystem II (PSII) and photosystem I (PSI), cyclic electron flow around PSI, and state transitions. The sequence is that of Cytochrome b6 from Ostreococcus tauri.